Here is a 280-residue protein sequence, read N- to C-terminus: Lipase chaperone (280 aa).

Residues 5–22 (ALTIITIALGSLGAVYFL) form a helical membrane-spanning segment.

This sequence belongs to the lipase chaperone family.

Its subcellular location is the cell inner membrane. Its function is as follows. May be involved in the folding of the extracellular lipase during its passage through the periplasm. The chain is Lipase chaperone (lifO) from Vibrio vulnificus (strain CMCP6).